A 153-amino-acid chain; its full sequence is SsrA-binding protein (153 aa).

Belongs to the SmpB family.

It is found in the cytoplasm. Required for rescue of stalled ribosomes mediated by trans-translation. Binds to transfer-messenger RNA (tmRNA), required for stable association of tmRNA with ribosomes. tmRNA and SmpB together mimic tRNA shape, replacing the anticodon stem-loop with SmpB. tmRNA is encoded by the ssrA gene; the 2 termini fold to resemble tRNA(Ala) and it encodes a 'tag peptide', a short internal open reading frame. During trans-translation Ala-aminoacylated tmRNA acts like a tRNA, entering the A-site of stalled ribosomes, displacing the stalled mRNA. The ribosome then switches to translate the ORF on the tmRNA; the nascent peptide is terminated with the 'tag peptide' encoded by the tmRNA and targeted for degradation. The ribosome is freed to recommence translation, which seems to be the essential function of trans-translation. The protein is SsrA-binding protein of Macrococcus caseolyticus (strain JCSC5402) (Macrococcoides caseolyticum).